The chain runs to 296 residues: Protease HtpX homolog (296 aa).

A run of 2 helical transmembrane segments spans residues 14–34 and 39–59; these read VVLLIVFFCLLAAIGAAVGYL and YQFGLVLALIIGVIYAVSMIF. Position 143 (H143) interacts with Zn(2+). The active site involves E144. H147 contributes to the Zn(2+) binding site. 2 helical membrane-spanning segments follow: residues 158-178 and 195-215; these read IAVALASAVTLISSIGSRMLF and ILVLIFSILSLILAPLAASLV. Zn(2+) is bound at residue E224.

The protein belongs to the peptidase M48B family. Requires Zn(2+) as cofactor.

The protein localises to the cell membrane. This chain is Protease HtpX homolog, found in Streptococcus agalactiae serotype Ia (strain ATCC 27591 / A909 / CDC SS700).